Here is a 565-residue protein sequence, read N- to C-terminus: DNA-dependent metalloprotease SPRTN (565 aa).

One can recognise a SprT-like domain in the interval 23 to 130 (RALFLEFNDT…RTGANISVYH (108 aa)). Residue His-88 participates in Zn(2+) binding. Residue Glu-89 is part of the active site. Zn(2+) is bound by residues His-92 and His-107. Positions 191–219 (EPENYPQKRKRKNDPTISEVNSSSHVKGK) are disordered. Polar residues predominate over residues 205 to 215 (PTISEVNSSSH). The short motif at 231-239 (FSGTGYKLF) is the SHP-box element. Positions 288-295 (STPAQSIL) match the PIP-box motif. The interval 349–389 (TLPSPSIQSTSQKPQKDISFGFTLPSQSFPSTSPGSNSENK) is disordered. Composition is skewed to polar residues over residues 351–361 (PSPSIQSTSQK) and 372–386 (LPSQSFPSTSPGSNS). Residues 436–463 (KVSCPVCGTEVLECKINDHLDTCTSSGP) form a UBZ4-type 1 zinc finger. Zn(2+)-binding residues include Cys-439, Cys-442, His-454, and Cys-458. The short motif at 476-499 (QSFPSTSQGSNSAIKEPLYKKLQI) is the Nuclear localization signal element. The segment at 537–564 (KVCCPVCGTDVLQDKINDHLDTCLQNCN) adopts a UBZ4-type 2 zinc-finger fold. Zn(2+) is bound by residues Cys-540, Cys-543, His-555, and Cys-559.

The protein belongs to the Spartan family. In terms of assembly, homodimer. It depends on Zn(2+) as a cofactor. Post-translationally, autocatalytically cleaved in response to double-stranded DNA-binding: autocatalytic cleavage takes place in trans and leads to inactivation.

Its subcellular location is the nucleus. It localises to the chromosome. Its activity is regulated as follows. DNA-binding activates the protease activity: single-stranded DNA-binding specifically activates ability to cleave covalent DNA-protein cross-links (DPCs). In contrast, double-stranded DNA-binding specifically activates autocatalytic cleavage, and subsequent inactivation. Its function is as follows. DNA-dependent metalloendopeptidase that mediates the proteolytic cleavage of covalent DNA-protein cross-links (DPCs) during DNA synthesis, thereby playing a key role in maintaining genomic integrity. DPCs are highly toxic DNA lesions that interfere with essential chromatin transactions, such as replication and transcription, and which are induced by reactive agents, such as UV light or formaldehyde. Associates with the DNA replication machinery and specifically removes DPCs during DNA synthesis. Catalyzes proteolytic cleavage of the hmces DNA-protein cross-link following unfolding by the brip1/fancj helicase. Acts as a pleiotropic protease for DNA-binding proteins cross-linked with DNA, such as top1, top2a, histones H3 and H4. Mediates degradation of DPCs that are not ubiquitinated, while it is not able to degrade ubiquitinated DPCs. SPRTN activation requires polymerase collision with DPCs followed by helicase bypass of DPCs. May also act as a 'reader' of ubiquitinated pcna: facilitates chromatin association of rad18 and is required for efficient pcna monoubiquitination, promoting a feed-forward loop to enhance pcna ubiquitination and translesion DNA synthesis. Acts as a regulator of translesion DNA synthesis by recruiting vcp/p97 to sites of DNA damage. This is DNA-dependent metalloprotease SPRTN from Xenopus laevis (African clawed frog).